The chain runs to 695 residues: Nucleoprotein (695 aa).

Coiled coils occupy residues 316-341 (VNVGEQYQQLREAAHDAEVKLQRRHE) and 372-399 (QTLAVLSQKREKLARLAAEIENNIVEDQ). 2 disordered regions span residues 424–458 (QARPVNRPTALPPPVDDKIEHESTEDSSSSSSFVD) and 483–615 (TSRE…AREA). Residues 438–447 (VDDKIEHEST) show a composition bias toward basic and acidic residues. 2 stretches are compositionally biased toward polar residues: residues 494 to 505 (PGQSQDLDNSQG) and 537 to 552 (TTDSQESIDQPGSDNE). Residues 603 to 606 (PSAP) carry the PTAP/PSAP motif motif.

It belongs to the filoviruses nucleoprotein family. Homooligomer. Homomultimerizes to form the nucleocapsid. Binds to viral genomic RNA. Interacts with VP35 and VP30 to form the nucleocapsid. Also interacts with VP24 and VP40. Post-translationally, phosphorylated.

The protein resides in the virion. It is found in the host cytoplasm. Its function is as follows. Encapsidates the genome, protecting it from nucleases. The encapsidated genomic RNA is termed the nucleocapsid and serves as template for transcription and replication. During replication, encapsidation by NP is coupled to RNA synthesis and all replicative products are resistant to nucleases. The chain is Nucleoprotein (NP) from Lake Victoria marburgvirus (strain Ozolin-75) (MARV).